The primary structure comprises 219 residues: 7-cyano-7-deazaguanine synthase (219 aa).

10-20 is a binding site for ATP; that stretch reads FSGGQDSTTCL. Residues Cys188, Cys196, Cys199, and Cys202 each coordinate Zn(2+).

This sequence belongs to the QueC family. It depends on Zn(2+) as a cofactor.

It carries out the reaction 7-carboxy-7-deazaguanine + NH4(+) + ATP = 7-cyano-7-deazaguanine + ADP + phosphate + H2O + H(+). It participates in purine metabolism; 7-cyano-7-deazaguanine biosynthesis. In terms of biological role, catalyzes the ATP-dependent conversion of 7-carboxy-7-deazaguanine (CDG) to 7-cyano-7-deazaguanine (preQ(0)). The protein is 7-cyano-7-deazaguanine synthase of Neisseria meningitidis serogroup A / serotype 4A (strain DSM 15465 / Z2491).